The chain runs to 50 residues: uncharacterized protein (50 aa).

This is an uncharacterized protein from Dichelobacter nodosus (Bacteroides nodosus).